The primary structure comprises 394 residues: Na(+)/H(+) antiporter NhaA (394 aa).

A run of 11 helical transmembrane segments spans residues 11-31 (LEAA…IFAN), 59-79 (LLMW…GMEV), 95-115 (IFPA…YWFI), 125-145 (GWAI…ALLS), 155-175 (FLLA…ALFF), 177-197 (HEMS…LVAM), 203-220 (TGLI…ASVL), 254-274 (ALAP…NAGV), 296-316 (LIIG…LLGI), 328-348 (IFAI…IAGL), and 365-385 (LGIL…LKIT).

This sequence belongs to the NhaA Na(+)/H(+) (TC 2.A.33) antiporter family.

It localises to the cell inner membrane. It catalyses the reaction Na(+)(in) + 2 H(+)(out) = Na(+)(out) + 2 H(+)(in). Functionally, na(+)/H(+) antiporter that extrudes sodium in exchange for external protons. The polypeptide is Na(+)/H(+) antiporter NhaA (Actinobacillus pleuropneumoniae serotype 7 (strain AP76)).